The following is a 498-amino-acid chain: ATP synthase subunit beta, chloroplastic (498 aa).

An ATP-binding site is contributed by 172 to 179 (GGAGVGKT).

Belongs to the ATPase alpha/beta chains family. In terms of assembly, F-type ATPases have 2 components, CF(1) - the catalytic core - and CF(0) - the membrane proton channel. CF(1) has five subunits: alpha(3), beta(3), gamma(1), delta(1), epsilon(1). CF(0) has four main subunits: a(1), b(1), b'(1) and c(9-12).

It is found in the plastid. Its subcellular location is the chloroplast thylakoid membrane. The enzyme catalyses ATP + H2O + 4 H(+)(in) = ADP + phosphate + 5 H(+)(out). Produces ATP from ADP in the presence of a proton gradient across the membrane. The catalytic sites are hosted primarily by the beta subunits. In Nicotiana tabacum (Common tobacco), this protein is ATP synthase subunit beta, chloroplastic.